We begin with the raw amino-acid sequence, 601 residues long: FAD-binding monooxygenase stcW (601 aa).

Residues Phe42 to Ser43, Glu64, Trp73, Asp84, Tyr90, and Val133 each bind FAD.

Belongs to the FAD-binding monooxygenase family. FAD is required as a cofactor.

Its pathway is mycotoxin biosynthesis; sterigmatocystin biosynthesis. FAD-binding monooxygenase; part of the gene cluster that mediates the biosynthesis of sterigmatocystin (ST), a polyketide-derived furanocoumarin which is part of the most toxic and carcinogenic compounds among the known mycotoxins. The first step in the biosynthesis of sterigmatocystin is the production of hexanoate by the fatty acid synthase (FAS) units stcJ and stcK. The polyketide backbone is assembled by the non-reducing polyketide synthase stcA by condensation of the starter hexanoyl-CoA and 7 malonyl-CoA extender units followed by cyclization and release of norsolorinic acid. Norsolorinic acid is the first stable intermediate in the biosynthesis of sterigmatocystin and is converted into averantin (AVN) by the ketoreductase stcE which reduces the hexanoate ketone to an alcohol. Averantin is then oxidized into 5'-hydroxyaverantin (HAVN) by the cytochrome P450 monooxygenase stcF. 5'-hydroxyaverantin is further converted to 5'-oxyaverantin (OAVN) by the 5'-hydroxyaverantin dehydrogenase stcG. The next step is the conversion of OAVN into averufin (AVF) which is catalyzed by a yet to be identified enzyme. The cytochrome P450 monooxygenase stcB and the flavin-binding monooxygenase stcW are both required for the conversion of averufin to 1-hydroxyversicolorone. The esterase stcI probably catalyzes the formation of versiconal hemiacetal acetate from 1-hydroxyversicolorone. The oxydoreductase stcN then probably catalyzes the biosynthetic step from versiconal to versicolorin B (VERB). The next step is performed by the versicolorin B desaturase stcL to produce versicolorin A (VERA). The ketoreductase stcU and the cytochrome P450 monooxygenase stcS are involved in the conversion of versicolorin A to demethylsterigmatocystin. The Baeyer-Villiger oxidas stcQ and the reductase stcR might be involved in the biosynthetic step from versicolorin A to demethylsterigmatocystin. The final step in the biosynthesis of sterigmatocystin is the methylation of demethylsterigmatocystin catalyzed by the methyltransferase stcP. This chain is FAD-binding monooxygenase stcW, found in Emericella nidulans (strain FGSC A4 / ATCC 38163 / CBS 112.46 / NRRL 194 / M139) (Aspergillus nidulans).